A 468-amino-acid polypeptide reads, in one-letter code: Glutamate--tRNA ligase (468 aa).

The 'HIGH' region signature appears at 9–19 (PSPTGYLHVGG). Positions 98, 100, 125, and 127 each coordinate Zn(2+). The 'KMSKS' region signature appears at 235–239 (KLSKR). Residue Lys238 coordinates ATP.

It belongs to the class-I aminoacyl-tRNA synthetase family. Glutamate--tRNA ligase type 1 subfamily. In terms of assembly, monomer. Requires Zn(2+) as cofactor.

The protein localises to the cytoplasm. The enzyme catalyses tRNA(Glu) + L-glutamate + ATP = L-glutamyl-tRNA(Glu) + AMP + diphosphate. Functionally, catalyzes the attachment of glutamate to tRNA(Glu) in a two-step reaction: glutamate is first activated by ATP to form Glu-AMP and then transferred to the acceptor end of tRNA(Glu). This Idiomarina loihiensis (strain ATCC BAA-735 / DSM 15497 / L2-TR) protein is Glutamate--tRNA ligase.